A 188-amino-acid chain; its full sequence is Phosphoribosylglycinamide formyltransferase (188 aa).

Position 12 to 14 (12 to 14 (GSN)) interacts with N(1)-(5-phospho-beta-D-ribosyl)glycinamide. (6R)-10-formyltetrahydrofolate contacts are provided by residues K66, 91–94 (MRLI), and N108. H110 functions as the Proton donor in the catalytic mechanism.

Belongs to the GART family.

It carries out the reaction N(1)-(5-phospho-beta-D-ribosyl)glycinamide + (6R)-10-formyltetrahydrofolate = N(2)-formyl-N(1)-(5-phospho-beta-D-ribosyl)glycinamide + (6S)-5,6,7,8-tetrahydrofolate + H(+). It functions in the pathway purine metabolism; IMP biosynthesis via de novo pathway; N(2)-formyl-N(1)-(5-phospho-D-ribosyl)glycinamide from N(1)-(5-phospho-D-ribosyl)glycinamide (10-formyl THF route): step 1/1. In terms of biological role, catalyzes the transfer of a formyl group from 10-formyltetrahydrofolate to 5-phospho-ribosyl-glycinamide (GAR), producing 5-phospho-ribosyl-N-formylglycinamide (FGAR) and tetrahydrofolate. The polypeptide is Phosphoribosylglycinamide formyltransferase (Staphylococcus aureus (strain Mu50 / ATCC 700699)).